Reading from the N-terminus, the 286-residue chain is Forkhead box protein E3 (286 aa).

The tract at residues 1-62 is disordered; that stretch reads MDAHVAFSGF…GRRRRRPLQR (62 aa). The segment at residues 64-158 is a DNA-binding region (fork-head); that stretch reads KPPYSYIALI…DNGSFLRRRK (95 aa).

It is found in the nucleus. Transcription factor that controls lens epithelial cell growth through regulation of proliferation, apoptosis and cell cycle. During lens development, controls the ratio of the lens fiber cells to the cells of the anterior lens epithelium by regulating the rate of proliferation and differentiation. Controls lens vesicle closure and subsequent separation of the lens vesicle from ectoderm. Controls the expression of DNAJB1 in a pathway that is crucial for the development of the anterior segment of the eye. This is Forkhead box protein E3 (Foxe3) from Rattus norvegicus (Rat).